A 201-amino-acid polypeptide reads, in one-letter code: Small ribosomal subunit protein uS4 (201 aa).

The S4 RNA-binding domain maps to 91–155 (TRLDNVVYRA…STLPFQVARE (65 aa)).

The protein belongs to the universal ribosomal protein uS4 family. In terms of assembly, part of the 30S ribosomal subunit. Contacts protein S5. The interaction surface between S4 and S5 is involved in control of translational fidelity.

One of the primary rRNA binding proteins, it binds directly to 16S rRNA where it nucleates assembly of the body of the 30S subunit. Its function is as follows. With S5 and S12 plays an important role in translational accuracy. The protein is Small ribosomal subunit protein uS4 of Nocardia farcinica (strain IFM 10152).